Consider the following 297-residue polypeptide: MGAQIRVYRQKIASTSSMRKIFKAMELIATSRITKARERVSASLPYANAITRAVSAVSSQHDIDHVLTTEPENPTRAAVLIMSSDRGLAGAYSANVLRKAEQLLTRLGEEGKDVDVYVVGRKAQTYFDFRGRGYKKLWTGQTDAPVAERAAEIGEVLVDAFLTDTADGGVDEIHVVFTEFVSLVKQNPHVVRLLPLEVVEEEAATAEDVLPLYEYEPDAEEVLDALLPKYIESRIFNAMLQSAASELANRQRAMKSAGDNATSLIKDYTLLMNNARQAEITQELTELIAGADALNNS.

It belongs to the ATPase gamma chain family. F-type ATPases have 2 components, CF(1) - the catalytic core - and CF(0) - the membrane proton channel. CF(1) has five subunits: alpha(3), beta(3), gamma(1), delta(1), epsilon(1). CF(0) has three main subunits: a, b and c.

The protein resides in the cell membrane. In terms of biological role, produces ATP from ADP in the presence of a proton gradient across the membrane. The gamma chain is believed to be important in regulating ATPase activity and the flow of protons through the CF(0) complex. The polypeptide is ATP synthase gamma chain (Micrococcus luteus (strain ATCC 4698 / DSM 20030 / JCM 1464 / CCM 169 / CCUG 5858 / IAM 1056 / NBRC 3333 / NCIMB 9278 / NCTC 2665 / VKM Ac-2230) (Micrococcus lysodeikticus)).